A 335-amino-acid polypeptide reads, in one-letter code: Galactosylgalactosylxylosylprotein 3-beta-glucuronosyltransferase 3 (335 aa).

Residues 1-7 are Cytoplasmic-facing; sequence MKLKLKN. Residues 8-28 form a helical; Signal-anchor for type II membrane protein membrane-spanning segment; the sequence is VFLAYFLVSIAGLLYALVQLG. Over 29 to 335 the chain is Lumenal; that stretch reads QPCDCLPPLR…GQGSDPAIEV (307 aa). Residues 82–84, Asp-113, Arg-156, Arg-161, and 194–196 contribute to the UDP-alpha-D-glucuronate site; these read PTY and DDD. Asp-196 serves as a coordination point for Mn(2+). Residues 243 to 252 form an interaction with galactose moiety of substrate glycoprotein region; the sequence is WEPNRPFPLD. The active-site Proton donor/acceptor is the Glu-281. N-linked (GlcNAc...) asparagine glycosylation is present at Asn-300. Residue 308–310 participates in UDP-alpha-D-glucuronate binding; that stretch reads HTR. Residues 312–322 show a composition bias toward basic and acidic residues; it reads EKPKMKQEEQL. The interval 312–335 is disordered; sequence EKPKMKQEEQLQRQGQGSDPAIEV.

Belongs to the glycosyltransferase 43 family. In terms of assembly, homodimer; disulfide-linked. Interacts with PXYLP1; the interaction increases the 2-phosphoxylose phosphatase activity of PXYLP1 during completion of linkage region formation in a B3GAT3-mediated manner. It depends on Mn(2+) as a cofactor. In terms of processing, N-glycosylated. As to expression, expressed in heart, aorta, bone, and also in osteoblasts.

The protein resides in the golgi apparatus membrane. It is found in the golgi apparatus. Its subcellular location is the cis-Golgi network. The catalysed reaction is 3-O-(beta-D-galactosyl-(1-&gt;3)-beta-D-galactosyl-(1-&gt;4)-beta-D-xylosyl)-L-seryl-[protein] + UDP-alpha-D-glucuronate = 3-O-(beta-D-GlcA-(1-&gt;3)-beta-D-Gal-(1-&gt;3)-beta-D-Gal-(1-&gt;4)-beta-D-Xyl)-L-seryl-[protein] + UDP + H(+). The protein operates within protein modification; protein glycosylation. Functionally, glycosaminoglycans biosynthesis. Involved in forming the linkage tetrasaccharide present in heparan sulfate and chondroitin sulfate. Transfers a glucuronic acid moiety from the uridine diphosphate-glucuronic acid (UDP-GlcUA) to the common linkage region trisaccharide Gal-beta-1,3-Gal-beta-1,4-Xyl covalently bound to a Ser residue at the glycosaminylglycan attachment site of proteoglycans. Can also play a role in the biosynthesis of l2/HNK-1 carbohydrate epitope on glycoproteins. Stimulates 2-phosphoxylose phosphatase activity of PXYLP1 in presence of uridine diphosphate-glucuronic acid (UDP-GlcUA) during completion of linkage region formation. This is Galactosylgalactosylxylosylprotein 3-beta-glucuronosyltransferase 3 (B3gat3) from Mus musculus (Mouse).